A 182-amino-acid polypeptide reads, in one-letter code: NADH-quinone oxidoreductase subunit I (182 aa).

2 4Fe-4S ferredoxin-type domains span residues 52-82 (LTRD…LQKA) and 92-121 (EFFR…LTPD). 8 residues coordinate [4Fe-4S] cluster: C62, C65, C68, C72, C101, C104, C107, and C111.

The protein belongs to the complex I 23 kDa subunit family. NDH-1 is composed of 13 different subunits. Subunits NuoA, H, J, K, L, M, N constitute the membrane sector of the complex. [4Fe-4S] cluster is required as a cofactor.

It is found in the cell inner membrane. The catalysed reaction is a quinone + NADH + 5 H(+)(in) = a quinol + NAD(+) + 4 H(+)(out). Functionally, NDH-1 shuttles electrons from NADH, via FMN and iron-sulfur (Fe-S) centers, to quinones in the respiratory chain. The immediate electron acceptor for the enzyme in this species is believed to be ubiquinone. Couples the redox reaction to proton translocation (for every two electrons transferred, four hydrogen ions are translocated across the cytoplasmic membrane), and thus conserves the redox energy in a proton gradient. The protein is NADH-quinone oxidoreductase subunit I of Pseudomonas aeruginosa (strain LESB58).